The primary structure comprises 264 residues: 3-methyl-2-oxobutanoate hydroxymethyltransferase (264 aa).

Mg(2+) contacts are provided by aspartate 45 and aspartate 84. Residues aspartate 45 to serine 46, aspartate 84, and lysine 112 contribute to the 3-methyl-2-oxobutanoate site. Glutamate 114 contacts Mg(2+). The Proton acceptor role is filled by glutamate 181.

This sequence belongs to the PanB family. In terms of assembly, homodecamer; pentamer of dimers. Requires Mg(2+) as cofactor.

The protein resides in the cytoplasm. The enzyme catalyses 3-methyl-2-oxobutanoate + (6R)-5,10-methylene-5,6,7,8-tetrahydrofolate + H2O = 2-dehydropantoate + (6S)-5,6,7,8-tetrahydrofolate. It participates in cofactor biosynthesis; (R)-pantothenate biosynthesis; (R)-pantoate from 3-methyl-2-oxobutanoate: step 1/2. In terms of biological role, catalyzes the reversible reaction in which hydroxymethyl group from 5,10-methylenetetrahydrofolate is transferred onto alpha-ketoisovalerate to form ketopantoate. The protein is 3-methyl-2-oxobutanoate hydroxymethyltransferase of Escherichia coli O127:H6 (strain E2348/69 / EPEC).